Here is a 181-residue protein sequence, read N- to C-terminus: Reverse rubrerythrin-1 (181 aa).

The Rubredoxin-like domain maps to 1–35 (MKKFKCVVCGYIYTGEDAPEKCPVCGAGKDKFVEV). Residues Cys-6, Cys-9, Cys-22, Cys-25, Glu-69, Glu-102, Glu-132, Glu-165, and His-168 each contribute to the Fe cation site. The Ferritin-like diiron domain occupies 52 to 181 (KGVDKEVLEG…FRGLLNRYFK (130 aa)).

In terms of assembly, homodimer. Requires Fe(3+) as cofactor.

It catalyses the reaction H2O2 + NADH + H(+) = NAD(+) + 2 H2O. Its function is as follows. Functions as the terminal component of an NADH peroxidase (NADH:H(2)O(2) oxidoreductase) when using NADH:rubredoxin oxidoreductase (NROR) and rubredoxin (Rd) as electron transport intermediaries from NADH to revRbr 1. Plays an important role in the oxidative stress defense system in C.acetobutylicum, an obligate anaerobic bacterium. Also exhibits NADH oxidase (NADH:O(2) oxidoreductase) activity in vitro, which is 100-fold lesser than that of FprA1/2 using the same electron transfer components. Therefore, its predominant function is most likely as a scavenger of its preferred substrate, H(2)O(2). The polypeptide is Reverse rubrerythrin-1 (rbr3A) (Clostridium acetobutylicum (strain ATCC 824 / DSM 792 / JCM 1419 / IAM 19013 / LMG 5710 / NBRC 13948 / NRRL B-527 / VKM B-1787 / 2291 / W)).